The sequence spans 97 residues: NADH-ubiquinone oxidoreductase chain 4L (97 aa).

A run of 3 helical transmembrane segments spans residues 1-21, 23-43, and 60-80; these read MALLIIILSMFYLGLMGILLN, LHFLSILLCLELLLISLFIGI, and LLLLTLSACEASIGLSLMVAL.

Belongs to the complex I subunit 4L family.

The protein resides in the mitochondrion membrane. It carries out the reaction a ubiquinone + NADH + 5 H(+)(in) = a ubiquinol + NAD(+) + 4 H(+)(out). Core subunit of the mitochondrial membrane respiratory chain NADH dehydrogenase (Complex I) that is believed to belong to the minimal assembly required for catalysis. Complex I functions in the transfer of electrons from NADH to the respiratory chain. The immediate electron acceptor for the enzyme is believed to be ubiquinone. The sequence is that of NADH-ubiquinone oxidoreductase chain 4L (ND4L) from Paracentrotus lividus (Common sea urchin).